The following is a 129-amino-acid chain: MGPRRKPRTPRRRPSSPVPGPSRRSSRPGKRRKFLWLKEIKKLQRSTDLLLRKLPFSRVVREICGKFTRGVDLCWQAQALLALQEAAEAFLVHLFEDAYLLTLHAGRVTIFPKDIQLTRRIRGIEGGLG.

The span at 1–14 (MGPRRKPRTPRRRP) shows a compositional bias: basic residues. The disordered stretch occupies residues 1-30 (MGPRRKPRTPRRRPSSPVPGPSRRSSRPGK). Gly-2 carries the post-translational modification N,N,N-trimethylglycine. A phosphoserine mark is found at Ser-16, Ser-22, and Ser-57. Residues 30-129 (KRRKFLWLKE…RIRGIEGGLG (100 aa)) are H3-like. Residues 64 to 105 (CGKFTRGVDLCWQAQALLALQEAAEAFLVHLFEDAYLLTLHA) form a CATD region.

Belongs to the histone H3 family. Component of centromeric nucleosomes, where DNA is wrapped around a histone octamer core. The octamer contains two molecules each of H2A, H2B, CENPA and H4 assembled in one CENPA-H4 heterotetramer and two H2A-H2B heterodimers. CENPA modulates the DNA-binding characteristics of nucleosomes so that protruding DNA ends have higher flexibility than in nucleosomes containing conventional histone H3. Inhibits binding of histone H1 to nucleosomes, since histone H1 binds preferentially to rigid DNA linkers that protrude from nucleosomes. Nucleosomes containing CENPA also contain histone H2A variants such as MACROH2A and H2A.Z/H2AZ1. The CENPA-H4 heterotetramer is more compact and structurally more rigid than corresponding H3-H4 heterotetramers. Can assemble into nucleosomes that contain both CENPA and histone H3.3; these nucleosomes interact with a single CENPC chain. Heterotrimer composed of HJURP, CENPA and histone H4, where HJURP interacts with the dimer formed by CENPA and histone H4 and prevents tetramerization of CENPA and H4. Component of the CENPA-NAC complex, at least composed of CENPA, CENPC, CENPH, CENPM, CENPN, CENPT and CENPU. Interacts (via CATD domain) with HJURP; the interaction is direct and is required for its localization to centromeres. Interacts with CENPC, CENPN and CENPT; interaction is direct. Part of a centromere complex consisting of CENPA, CENPT and CENPW. Identified in centromere complexes containing histones H2A, H2B and H4, and at least CENPA, CENPB, CENPC, CENPT, CENPN, HJURP, SUPT16H, SSRP1 and RSF1. Can self-associate. The CENPA-H4 heterotetramer can bind DNA by itself (in vitro). Interacts with CDK1, PPP1CA and RBBP7. Post-translationally, trimethylated by NTMT1 at the N-terminal glycine after cleavage of Met-1. Methylation is low before incorporation into nucleosomes and increases with cell cycle progression, with the highest levels in mitotic nucleosomes. In terms of processing, phosphorylated by CDK1 at Ser-57 during early mitosis; this abolishes association with chromatin and centromeres, prevents interaction with HJURP and thereby prevents premature assembly of CENPA into centromeres. Dephosphorylated at Ser-57 by PPP1CA during late mitosis. Poly-ADP-ribosylated by PARP1.

The protein localises to the nucleus. It localises to the chromosome. The protein resides in the centromere. In terms of biological role, histone H3-like nucleosomal protein that is specifically found in centromeric nucleosomes. Replaces conventional H3 in the nucleosome core of centromeric chromatin that serves as an assembly site for the inner kinetochore. The presence of CENPA subtly modifies the nucleosome structure and the way DNA is wrapped around the nucleosome and gives rise to protruding DNA ends that are less well-ordered and rigid compared to nucleosomes containing histone H3. May serve as an epigenetic mark that propagates centromere identity through replication and cell division. Required for recruitment and assembly of kinetochore proteins, and as a consequence required for progress through mitosis, chromosome segregation and cytokinesis. This is Histone H3-like centromeric protein A (CENPA) from Cricetulus griseus (Chinese hamster).